Consider the following 685-residue polypeptide: MGAPTLPRIIPPVAEKLAEARQRVEELREQIRYHNRKYYVEDAPEISDAEYDALYRELEELESRFPELVTPDSPTQRVGGEPLEEFEEVRHAVPMLSLQNARRVEELREWDARVRRLLGPEEEGRLRYVTELKIDGLAVSLRYENGRLVRGATRGNGFVGEDVTRQLRTIRSVPDRLDDDPPGVLEPRGEVYIKLKDFEEFNRRRQERGERPFANPRNLAAGSVRQLDPRVTARRPLTIYLYGVGEGYENFESHSEALAALRRYGLRVNPHTVHGDIDSVIEECGRWAKKREALDFQVDGVVVKVDSREQQERLGAVQKAPRWAIAYKFEPLAGRTRLRDIVVTVGRTGALTPQAVLEPVNVGGVTISRATLHNEDYIKEKGILIGDTVIVERAGDVIPQVVRPVPEERDGDEEEFRMPERCPVCGERVSRPEGEAITRCANVRCPAQALEHIIHWASRGAMDIEGLGEKLARKLFDLGLIRDVADLYELRAEQLAPLEGLGEKSAQNLIRAIERSKERPFDRVLFGLGIRHVGSATAELIAERFSGEELLRGVGVEELTQIEGVGEIVARAVVEYFSLEENRKLVRRLMEHGLNFGPVRGKPEEGPLSGRRLVITGTLSRPRSEISDLIEGAGGTVTSSVSRNTDYLVAGENPGSKLERARELGVPVLDEEGLRRLLSGEERPG.

Residues 48 to 52 (DAEYD), 97 to 98 (SL), and Glu-131 contribute to the NAD(+) site. Lys-133 acts as the N6-AMP-lysine intermediate in catalysis. Positions 154, 190, 304, and 328 each coordinate NAD(+). The Zn(2+) site is built by Cys-422, Cys-425, Cys-440, and Cys-445. The BRCT domain maps to 603 to 685 (PEEGPLSGRR…RLLSGEERPG (83 aa)).

The protein belongs to the NAD-dependent DNA ligase family. LigA subfamily. Requires Mg(2+) as cofactor. It depends on Mn(2+) as a cofactor.

It catalyses the reaction NAD(+) + (deoxyribonucleotide)n-3'-hydroxyl + 5'-phospho-(deoxyribonucleotide)m = (deoxyribonucleotide)n+m + AMP + beta-nicotinamide D-nucleotide.. Its function is as follows. DNA ligase that catalyzes the formation of phosphodiester linkages between 5'-phosphoryl and 3'-hydroxyl groups in double-stranded DNA using NAD as a coenzyme and as the energy source for the reaction. It is essential for DNA replication and repair of damaged DNA. This Rubrobacter xylanophilus (strain DSM 9941 / JCM 11954 / NBRC 16129 / PRD-1) protein is DNA ligase.